A 90-amino-acid chain; its full sequence is Probable Fe(2+)-trafficking protein (90 aa).

It belongs to the Fe(2+)-trafficking protein family.

Could be a mediator in iron transactions between iron acquisition and iron-requiring processes, such as synthesis and/or repair of Fe-S clusters in biosynthetic enzymes. This chain is Probable Fe(2+)-trafficking protein, found in Pseudoalteromonas translucida (strain TAC 125).